Here is a 435-residue protein sequence, read N- to C-terminus: AP-2 complex subunit mu (435 aa).

In terms of domain architecture, MHD spans 170–434 (RNELFLDVLE…IGRSGIYETR (265 aa)). 3 residues coordinate a 1,2-diacyl-sn-glycero-3-phospho-(1D-myo-inositol-3,4,5-trisphosphate): Lys341, Lys345, and Lys354.

Belongs to the adaptor complexes medium subunit family. As to quaternary structure, adaptor protein complex 2 (AP-2) is a heterotetramer composed of two large adaptins (alpha-type subunit and beta-type subunit), a medium adaptin (mu-type subunit) and a small adaptin (sigma-type subunit).

The protein resides in the cell membrane. Its subcellular location is the membrane. The protein localises to the coated pit. Component of the adaptor complexes which link clathrin to receptors in coated vesicles. Clathrin-associated protein complexes are believed to interact with the cytoplasmic tails of membrane proteins, leading to their selection and concentration. AP50 is a subunit of the plasma membrane adaptor. The complex binds polyphosphoinositide-containing lipids. This chain is AP-2 complex subunit mu (ap2m1), found in Xenopus tropicalis (Western clawed frog).